The following is a 702-amino-acid chain: Ribosomal RNA large subunit methyltransferase K/L (702 aa).

Positions 43–154 constitute a THUMP domain; it reads LVYQSLMWSR…KETASIALDL (112 aa).

Belongs to the methyltransferase superfamily. RlmKL family.

It localises to the cytoplasm. It carries out the reaction guanosine(2445) in 23S rRNA + S-adenosyl-L-methionine = N(2)-methylguanosine(2445) in 23S rRNA + S-adenosyl-L-homocysteine + H(+). The enzyme catalyses guanosine(2069) in 23S rRNA + S-adenosyl-L-methionine = N(2)-methylguanosine(2069) in 23S rRNA + S-adenosyl-L-homocysteine + H(+). Its function is as follows. Specifically methylates the guanine in position 2445 (m2G2445) and the guanine in position 2069 (m7G2069) of 23S rRNA. The polypeptide is Ribosomal RNA large subunit methyltransferase K/L (Shigella dysenteriae serotype 1 (strain Sd197)).